We begin with the raw amino-acid sequence, 757 residues long: Probable ubiquitin carboxyl-terminal hydrolase MINDY-4 (757 aa).

Disordered regions lie at residues phenylalanine 152–proline 173 and serine 190–glycine 334. Residues serine 190–arginine 201 show a composition bias toward basic and acidic residues. Residues serine 219 and serine 223 each carry the phosphoserine modification. The segment covering serine 232–glutamine 242 has biased composition (low complexity). Residues cysteine 254–glutamate 277 show a composition bias toward polar residues. The residue at position 289 (serine 289) is a Phosphoserine. Over residues proline 299–serine 310 the composition is skewed to basic and acidic residues. Residue cysteine 456 is the Nucleophile of the active site. Histidine 677 acts as the Proton acceptor in catalysis.

It belongs to the MINDY deubiquitinase family. FAM188 subfamily.

The enzyme catalyses Thiol-dependent hydrolysis of ester, thioester, amide, peptide and isopeptide bonds formed by the C-terminal Gly of ubiquitin (a 76-residue protein attached to proteins as an intracellular targeting signal).. Its function is as follows. Probable hydrolase that can remove 'Lys-48'-linked conjugated ubiquitin from proteins. The sequence is that of Probable ubiquitin carboxyl-terminal hydrolase MINDY-4 from Homo sapiens (Human).